Reading from the N-terminus, the 236-residue chain is 5'-methylthioadenosine/S-adenosylhomocysteine nucleosidase (236 aa).

The active-site Proton acceptor is the E12. Residues G78, I153, and 174–175 (ME) each bind substrate. D198 functions as the Proton donor in the catalytic mechanism.

This sequence belongs to the PNP/UDP phosphorylase family. MtnN subfamily.

The catalysed reaction is S-adenosyl-L-homocysteine + H2O = S-(5-deoxy-D-ribos-5-yl)-L-homocysteine + adenine. It catalyses the reaction S-methyl-5'-thioadenosine + H2O = 5-(methylsulfanyl)-D-ribose + adenine. It carries out the reaction 5'-deoxyadenosine + H2O = 5-deoxy-D-ribose + adenine. Its pathway is amino-acid biosynthesis; L-methionine biosynthesis via salvage pathway; S-methyl-5-thio-alpha-D-ribose 1-phosphate from S-methyl-5'-thioadenosine (hydrolase route): step 1/2. Functionally, catalyzes the irreversible cleavage of the glycosidic bond in both 5'-methylthioadenosine (MTA) and S-adenosylhomocysteine (SAH/AdoHcy) to adenine and the corresponding thioribose, 5'-methylthioribose and S-ribosylhomocysteine, respectively. Also cleaves 5'-deoxyadenosine, a toxic by-product of radical S-adenosylmethionine (SAM) enzymes, into 5-deoxyribose and adenine. The chain is 5'-methylthioadenosine/S-adenosylhomocysteine nucleosidase from Shewanella baltica (strain OS155 / ATCC BAA-1091).